Reading from the N-terminus, the 134-residue chain is UPF0412 protein YaaI (134 aa).

A signal peptide spans 1–23; that stretch reads MKSVFTLSASLAISLLLCCTAQA.

The protein belongs to the UPF0412 family.

This chain is UPF0412 protein YaaI, found in Escherichia coli O7:K1 (strain IAI39 / ExPEC).